The chain runs to 470 residues: Neuraminidase (470 aa).

Residues 1–14 (MNPNQKIIAIGSAS) lie on the Intravirion side of the membrane. Positions 11 to 32 (GSASLGILILNVILHVVSIIVT) are involved in apical transport and lipid raft association. Residues 15 to 35 (LGILILNVILHVVSIIVTVLV) form a helical membrane-spanning segment. Residues 32–86 (TVLVLNNNGTGLNCNRTIIREYNETVRVERITQWYNTSTIEYIERPSNEYYMNNT) are hypervariable stalk region. The Virion surface portion of the chain corresponds to 36–470 (LNNNGTGLNC…AILPFDIDKM (435 aa)). N-linked (GlcNAc...) asparagine; by host glycans are attached at residues Asn-39, Asn-46, Asn-54, Asn-67, and Asn-84. The head of neuraminidase stretch occupies residues 89 to 470 (LCEAQGFAPF…AILPFDIDKM (382 aa)). Disulfide bonds link Cys-90–Cys-417, Cys-122–Cys-127, Cys-182–Cys-229, Cys-231–Cys-236, Cys-277–Cys-290, Cys-279–Cys-288, Cys-316–Cys-335, and Cys-421–Cys-446. A substrate-binding site is contributed by Arg-116. Residue Asn-144 is glycosylated (N-linked (GlcNAc...) asparagine; by host). Residue Asp-149 is the Proton donor/acceptor of the active site. Arg-150 contacts substrate. Position 275–276 (275–276 (EE)) interacts with substrate. Arg-291 contributes to the substrate binding site. Residue Asp-292 coordinates Ca(2+). Residue Asn-293 is glycosylated (N-linked (GlcNAc...) asparagine; by host). 2 residues coordinate Ca(2+): Gly-296 and Asp-322. Substrate is bound at residue Arg-368. An N-linked (GlcNAc...) asparagine; by host glycan is attached at Asn-398. Tyr-402 acts as the Nucleophile in catalysis.

It belongs to the glycosyl hydrolase 34 family. As to quaternary structure, homotetramer. The cofactor is Ca(2+). Post-translationally, N-glycosylated.

The protein resides in the virion membrane. Its subcellular location is the host apical cell membrane. The catalysed reaction is Hydrolysis of alpha-(2-&gt;3)-, alpha-(2-&gt;6)-, alpha-(2-&gt;8)- glycosidic linkages of terminal sialic acid residues in oligosaccharides, glycoproteins, glycolipids, colominic acid and synthetic substrates.. Its activity is regulated as follows. Inhibited by the neuraminidase inhibitors zanamivir (Relenza) and oseltamivir (Tamiflu). These drugs interfere with the release of progeny virus from infected cells and are effective against all influenza strains. Resistance to neuraminidase inhibitors is quite rare. Catalyzes the removal of terminal sialic acid residues from viral and cellular glycoconjugates. Cleaves off the terminal sialic acids on the glycosylated HA during virus budding to facilitate virus release. Additionally helps virus spread through the circulation by further removing sialic acids from the cell surface. These cleavages prevent self-aggregation and ensure the efficient spread of the progeny virus from cell to cell. Otherwise, infection would be limited to one round of replication. Described as a receptor-destroying enzyme because it cleaves a terminal sialic acid from the cellular receptors. May facilitate viral invasion of the upper airways by cleaving the sialic acid moieties on the mucin of the airway epithelial cells. Likely to plays a role in the budding process through its association with lipid rafts during intracellular transport. May additionally display a raft-association independent effect on budding. Plays a role in the determination of host range restriction on replication and virulence. Sialidase activity in late endosome/lysosome traffic seems to enhance virus replication. The protein is Neuraminidase of Aves (Horse).